The sequence spans 264 residues: Putative hydro-lyase Psyr_0498 (264 aa).

The protein belongs to the D-glutamate cyclase family.

This is Putative hydro-lyase Psyr_0498 from Pseudomonas syringae pv. syringae (strain B728a).